The sequence spans 355 residues: Biotin synthase (355 aa).

The region spanning 51-275 (NTVKVNYLVN…VCPDKEIRIA (225 aa)) is the Radical SAM core domain. The [4Fe-4S] cluster site is built by Cys-66, Cys-70, and Cys-73. Cys-110, Cys-143, Cys-203, and Arg-273 together coordinate [2Fe-2S] cluster.

This sequence belongs to the radical SAM superfamily. Biotin synthase family. As to quaternary structure, homodimer. [4Fe-4S] cluster is required as a cofactor. Requires [2Fe-2S] cluster as cofactor.

The catalysed reaction is (4R,5S)-dethiobiotin + (sulfur carrier)-SH + 2 reduced [2Fe-2S]-[ferredoxin] + 2 S-adenosyl-L-methionine = (sulfur carrier)-H + biotin + 2 5'-deoxyadenosine + 2 L-methionine + 2 oxidized [2Fe-2S]-[ferredoxin]. It participates in cofactor biosynthesis; biotin biosynthesis; biotin from 7,8-diaminononanoate: step 2/2. Catalyzes the conversion of dethiobiotin (DTB) to biotin by the insertion of a sulfur atom into dethiobiotin via a radical-based mechanism. The protein is Biotin synthase of Saccharopolyspora erythraea (strain ATCC 11635 / DSM 40517 / JCM 4748 / NBRC 13426 / NCIMB 8594 / NRRL 2338).